The chain runs to 157 residues: ATP synthase subunit b (157 aa).

A helical transmembrane segment spans residues 7 to 29 (LVSQAIAFSIFIWFTTKFVWPYL).

Belongs to the ATPase B chain family. F-type ATPases have 2 components, F(1) - the catalytic core - and F(0) - the membrane proton channel. F(1) has five subunits: alpha(3), beta(3), gamma(1), delta(1), epsilon(1). F(0) has three main subunits: a(1), b(2) and c(10-14). The alpha and beta chains form an alternating ring which encloses part of the gamma chain. F(1) is attached to F(0) by a central stalk formed by the gamma and epsilon chains, while a peripheral stalk is formed by the delta and b chains.

The protein resides in the cell inner membrane. In terms of biological role, f(1)F(0) ATP synthase produces ATP from ADP in the presence of a proton or sodium gradient. F-type ATPases consist of two structural domains, F(1) containing the extramembraneous catalytic core and F(0) containing the membrane proton channel, linked together by a central stalk and a peripheral stalk. During catalysis, ATP synthesis in the catalytic domain of F(1) is coupled via a rotary mechanism of the central stalk subunits to proton translocation. Functionally, component of the F(0) channel, it forms part of the peripheral stalk, linking F(1) to F(0). The polypeptide is ATP synthase subunit b (Nitrosomonas eutropha (strain DSM 101675 / C91 / Nm57)).